The sequence spans 367 residues: GMP synthase [glutamine-hydrolyzing] subunit B (367 aa).

A GMPS ATP-PPase domain is found at 2–190 (FDPASFVKEI…LKLPKEISER (189 aa)). Residue 29–35 (SGGVDST) coordinates ATP.

Heterodimer composed of a glutamine amidotransferase subunit (A) and a GMP-binding subunit (B).

The enzyme catalyses XMP + L-glutamine + ATP + H2O = GMP + L-glutamate + AMP + diphosphate + 2 H(+). It participates in purine metabolism; GMP biosynthesis; GMP from XMP (L-Gln route): step 1/1. In terms of biological role, catalyzes the synthesis of GMP from XMP. The sequence is that of GMP synthase [glutamine-hydrolyzing] subunit B from Saccharolobus islandicus (strain M.16.27) (Sulfolobus islandicus).